The primary structure comprises 1000 residues: Chromosome transmission fidelity protein 18 homolog (1000 aa).

Disordered regions lie at residues 53–89, 130–159, and 272–301; these read SAGDPIRSNANSKPTGDSNGEALACIDTSKSKKRDAS, AGNSTALSDDITPPPSPNHSPKKNERDSKF, and EFGENDSEILENDDNAGEEDDEDEPSSHSL. Residues 60 to 70 are compositionally biased toward polar residues; that stretch reads SNANSKPTGDS. A compositionally biased stretch (acidic residues) spans 272 to 295; that stretch reads EFGENDSEILENDDNAGEEDDEDE. 396 to 403 contacts ATP; sequence GPPGLGKT. The span at 888-898 shows a compositional bias: polar residues; the sequence is ARNAGRDNTTA. A disordered region spans residues 888 to 916; that stretch reads ARNAGRDNTTAAAAVKTADPKGAKSAAKP.

The protein belongs to the activator 1 small subunits family. CTF18 subfamily. As to quaternary structure, component of the CTF18-RFC complex, which consists of ctf18, ctf8, dcc1, rfc2, rfc3, rfc4 and rfc5. The CTF18-RFC complex associates with pcna.

Its subcellular location is the nucleus. In terms of biological role, chromosome cohesion factor involved in sister chromatid cohesion and fidelity of chromosome transmission. Component of one of the cell nuclear antigen loader complexes, CTF18-replication factor C (CTF18-RFC), which consists of ctf18, ctf8, dcc1, rfc2, rfc3, rfc4 and rfc5. The CTF18-RFC complex binds to single-stranded and primed DNAs and has weak ATPase activity that is stimulated by the presence of primed DNA, replication protein A (RPA) and by proliferating cell nuclear antigen (pcna). The CTF18-RFC complex catalyzes the ATP-dependent loading of pcna onto primed and gapped DNA. This chain is Chromosome transmission fidelity protein 18 homolog (chtf18), found in Xenopus laevis (African clawed frog).